The sequence spans 119 residues: Large ribosomal subunit protein bL20 (119 aa).

The protein belongs to the bacterial ribosomal protein bL20 family.

In terms of biological role, binds directly to 23S ribosomal RNA and is necessary for the in vitro assembly process of the 50S ribosomal subunit. It is not involved in the protein synthesizing functions of that subunit. The sequence is that of Large ribosomal subunit protein bL20 from Geobacillus kaustophilus (strain HTA426).